The primary structure comprises 131 residues: CDGSH iron-sulfur domain-containing protein 2 homolog A (131 aa).

Topologically, residues 1-35 (MEFLSKIVRVHIPDYLNSVPVPDSFGGFLDLTAGQ) are lumenal. Residues 36 to 58 (WLHLFAFSGTVAAAVYMSVKPYL) traverse the membrane as a helical segment. The Cytoplasmic segment spans residues 59–131 (DKKDQKDQLV…GPLVLKRKDV (73 aa)). C95, C97, C106, and H110 together coordinate [2Fe-2S] cluster.

This sequence belongs to the CISD protein family. CISD2 subfamily. It depends on [2Fe-2S] cluster as a cofactor.

It is found in the endoplasmic reticulum membrane. The polypeptide is CDGSH iron-sulfur domain-containing protein 2 homolog A (Branchiostoma floridae (Florida lancelet)).